Here is a 235-residue protein sequence, read N- to C-terminus: Orotidine 5'-phosphate decarboxylase (235 aa).

Substrate contacts are provided by residues D16, K38, 65–74 (DLKLHDIGNT), T120, R181, Q190, G210, and R211. K67 (proton donor) is an active-site residue.

This sequence belongs to the OMP decarboxylase family. Type 1 subfamily. In terms of assembly, homodimer.

It carries out the reaction orotidine 5'-phosphate + H(+) = UMP + CO2. Its pathway is pyrimidine metabolism; UMP biosynthesis via de novo pathway; UMP from orotate: step 2/2. Its function is as follows. Catalyzes the decarboxylation of orotidine 5'-monophosphate (OMP) to uridine 5'-monophosphate (UMP). The protein is Orotidine 5'-phosphate decarboxylase of Rhodopseudomonas palustris (strain BisA53).